The sequence spans 109 residues: Iron-sulfur cluster assembly protein CyaY (109 aa).

It belongs to the frataxin family.

Its function is as follows. Involved in iron-sulfur (Fe-S) cluster assembly. May act as a regulator of Fe-S biogenesis. This is Iron-sulfur cluster assembly protein CyaY from Bordetella petrii (strain ATCC BAA-461 / DSM 12804 / CCUG 43448).